The chain runs to 833 residues: DNA gyrase subunit A (833 aa).

A Topo IIA-type catalytic domain is found at 35–498 (LPDVRDGMKP…SEDMFEDEDL (464 aa)). The active-site O-(5'-phospho-DNA)-tyrosine intermediate is tyrosine 123. The GyrA-box motif lies at 525–531 (QKRGGRG). Residues 803–833 (RVDIEDDELDEDESIEEERDDRSEVEQGENE) form a disordered region. A compositionally biased stretch (acidic residues) spans 806-821 (IEDDELDEDESIEEER).

Belongs to the type II topoisomerase GyrA/ParC subunit family. As to quaternary structure, heterotetramer, composed of two GyrA and two GyrB chains. In the heterotetramer, GyrA contains the active site tyrosine that forms a transient covalent intermediate with DNA, while GyrB binds cofactors and catalyzes ATP hydrolysis.

The protein localises to the cytoplasm. It carries out the reaction ATP-dependent breakage, passage and rejoining of double-stranded DNA.. Its function is as follows. A type II topoisomerase that negatively supercoils closed circular double-stranded (ds) DNA in an ATP-dependent manner to modulate DNA topology and maintain chromosomes in an underwound state. Negative supercoiling favors strand separation, and DNA replication, transcription, recombination and repair, all of which involve strand separation. Also able to catalyze the interconversion of other topological isomers of dsDNA rings, including catenanes and knotted rings. Type II topoisomerases break and join 2 DNA strands simultaneously in an ATP-dependent manner. This chain is DNA gyrase subunit A, found in Halalkalibacterium halodurans (strain ATCC BAA-125 / DSM 18197 / FERM 7344 / JCM 9153 / C-125) (Bacillus halodurans).